The sequence spans 688 residues: Soluble guanylate cyclase gcy-35 (688 aa).

A heme-binding site is contributed by His105. Residues 358–401 adopt a coiled-coil conformation; sequence LNQSRMSQVELNRTLEETTKKLKKMAQELEIEKQKTDELLCELM. The 129-residue stretch at 424–552 folds into the Guanylate cyclase domain; that stretch reads TLLFTDIVTF…DTVNVANKME (129 aa). Asp429 and Asp473 together coordinate Mg(2+). The tract at residues 644-688 is disordered; it reads VENGNSAQNNHNNNNNTHHSGRKLMNGSSVDPGSHHIRSPTCTIS. The segment covering 646–659 has biased composition (low complexity); that stretch reads NGNSAQNNHNNNNN.

It belongs to the adenylyl cyclase class-4/guanylyl cyclase family. As to quaternary structure, heterodimer; heterodimerizes with gcy-36, and possibly with other soluble guanylate cyclases. It depends on heme as a cofactor. Expressed in URX, AQR and PQR neurons. Also expressed in ALN, SDQ and BDU neurons, and variably in AVM, PLM and PLN neurons, pharyngeal and body wall muscles, and the excretory cell.

The protein localises to the cytoplasm. It is found in the cell projection. The protein resides in the dendrite. The enzyme catalyses GTP = 3',5'-cyclic GMP + diphosphate. With respect to regulation, regulated by molecular oxygen, which binds to the heme binding site. Probably not activated by nitric oxide (NO). Functionally, plays a central role in social feeding behavior and oxygen sensation by synthesizing 3',5'-cyclic guanosine monophosphate (cGMP) from GTP. Oxygen, which binds to its heme-binding sites, probably regulates social behavior by modulating its activity. cGMP is a common second messenger in sensory transduction and is implicated in oxygen sensation. Indeed, C.elegans exhibits a strong behavioral preference for 5-12% oxygen, avoiding higher and lower oxygen levels; a higher level of oxygen inducing a naturally polymorphic social feeding behavior. Involved in avoidance of hyperoxia and for oxygen-induced aggregation and bordering, probably by mediating oxygen-sensing in URX, AQR and PQR sensory neurons. The sequence is that of Soluble guanylate cyclase gcy-35 (gcy-35) from Caenorhabditis elegans.